Consider the following 293-residue polypeptide: MPPKLYHPQPTHAIPVSNMRVNTRYEPTAGFSGTSVPSVQAANPSAYLPNSATAQMGFQLGKNAVNAGQEYVEQNFGKWLSTTRLHHYFTVTNSYVVAKLLLIIFPWRRRSWARKLRRSEINGSAEGYCPPAEDLNSPDMYIPLMAFTTHILLLCALAGLQDDFQPELFGLRASKACAVVLVEFLATRLGCYLLNISSQSQVLDLLAFSGYKFVGLILTSLSKLFEMPWVTRFVFLYMYLATAFFLLRSLKYAVLPESTMAINATITSHQRSRRIYFLFFIAASQILFMYVLS.

The Cytoplasmic portion of the chain corresponds to 1–139 (MPPKLYHPQP…PPAEDLNSPD (139 aa)). Residues 140 to 160 (MYIPLMAFTTHILLLCALAGL) traverse the membrane as a helical segment. At 161–175 (QDDFQPELFGLRASK) the chain is on the lumenal side. The helical transmembrane segment at 176 to 196 (ACAVVLVEFLATRLGCYLLNI) threads the bilayer. Topologically, residues 197-201 (SSQSQ) are cytoplasmic. Residues 202–222 (VLDLLAFSGYKFVGLILTSLS) traverse the membrane as a helical segment. Residues 223 to 226 (KLFE) lie on the Lumenal side of the membrane. A helical membrane pass occupies residues 227 to 247 (MPWVTRFVFLYMYLATAFFLL). The Cytoplasmic segment spans residues 248–271 (RSLKYAVLPESTMAINATITSHQR). A helical transmembrane segment spans residues 272 to 292 (SRRIYFLFFIAASQILFMYVL). A topological domain (lumenal) is located at residue serine 293.

Belongs to the YIF1 family. Component of the yip1-yif1 complex, composed of at least yif1, yip1 and yos1. The complex interacts with the ER to Golgi SNAREs bos1 and sec22.

The protein localises to the endoplasmic reticulum membrane. It localises to the golgi apparatus membrane. Its subcellular location is the cytoplasmic vesicle. It is found in the COPII-coated vesicle. Required for fusion of ER-derived vesicles with the Golgi during ER-to-Golgi protein transport. May be involved in proper membrane localization of Rab GTPases. In Schizosaccharomyces pombe (strain 972 / ATCC 24843) (Fission yeast), this protein is Protein transport protein yif1.